Consider the following 220-residue polypeptide: Deoxyribose-phosphate aldolase (220 aa).

Catalysis depends on Asp89, which acts as the Proton donor/acceptor. Catalysis depends on Lys151, which acts as the Schiff-base intermediate with acetaldehyde. Lys180 serves as the catalytic Proton donor/acceptor.

The protein belongs to the DeoC/FbaB aldolase family. DeoC type 1 subfamily.

It localises to the cytoplasm. The catalysed reaction is 2-deoxy-D-ribose 5-phosphate = D-glyceraldehyde 3-phosphate + acetaldehyde. The protein operates within carbohydrate degradation; 2-deoxy-D-ribose 1-phosphate degradation; D-glyceraldehyde 3-phosphate and acetaldehyde from 2-deoxy-alpha-D-ribose 1-phosphate: step 2/2. Catalyzes a reversible aldol reaction between acetaldehyde and D-glyceraldehyde 3-phosphate to generate 2-deoxy-D-ribose 5-phosphate. The sequence is that of Deoxyribose-phosphate aldolase from Streptococcus mutans serotype c (strain ATCC 700610 / UA159).